A 71-amino-acid chain; its full sequence is ATP synthase subunit c (71 aa).

Transmembrane regions (helical) follow at residues 4 to 24 and 47 to 67; these read IAAAIAIMGAAIGAGYGNGQV and FIGVALVEAVPILGVVIALIL.

This sequence belongs to the ATPase C chain family. F-type ATPases have 2 components, F(1) - the catalytic core - and F(0) - the membrane proton channel. F(1) has five subunits: alpha(3), beta(3), gamma(1), delta(1), epsilon(1). F(0) has three main subunits: a(1), b(2) and c(10-14). The alpha and beta chains form an alternating ring which encloses part of the gamma chain. F(1) is attached to F(0) by a central stalk formed by the gamma and epsilon chains, while a peripheral stalk is formed by the delta and b chains.

It is found in the cell membrane. Functionally, f(1)F(0) ATP synthase produces ATP from ADP in the presence of a proton or sodium gradient. F-type ATPases consist of two structural domains, F(1) containing the extramembraneous catalytic core and F(0) containing the membrane proton channel, linked together by a central stalk and a peripheral stalk. During catalysis, ATP synthesis in the catalytic domain of F(1) is coupled via a rotary mechanism of the central stalk subunits to proton translocation. In terms of biological role, key component of the F(0) channel; it plays a direct role in translocation across the membrane. A homomeric c-ring of between 10-14 subunits forms the central stalk rotor element with the F(1) delta and epsilon subunits. The protein is ATP synthase subunit c of Enterococcus hirae (strain ATCC 9790 / DSM 20160 / JCM 8729 / LMG 6399 / NBRC 3181 / NCIMB 6459 / NCDO 1258 / NCTC 12367 / WDCM 00089 / R).